A 453-amino-acid chain; its full sequence is tRNA modification GTPase MnmE (453 aa).

Residues arginine 22, glutamate 79, and lysine 119 each coordinate (6S)-5-formyl-5,6,7,8-tetrahydrofolate. In terms of domain architecture, TrmE-type G spans 215–376 (GMKVVIAGRP…LKQHLKSLMG (162 aa)). Asparagine 225 is a binding site for K(+). GTP is bound by residues 225-230 (NAGKSS), 244-250 (TEIAGTT), 269-272 (DTAG), and 334-337 (NKAD). Serine 229 contacts Mg(2+). Residues threonine 244, isoleucine 246, and threonine 249 each contribute to the K(+) site. Threonine 250 serves as a coordination point for Mg(2+). Lysine 453 is a (6S)-5-formyl-5,6,7,8-tetrahydrofolate binding site.

The protein belongs to the TRAFAC class TrmE-Era-EngA-EngB-Septin-like GTPase superfamily. TrmE GTPase family. Homodimer. Heterotetramer of two MnmE and two MnmG subunits. K(+) serves as cofactor.

Its subcellular location is the cytoplasm. Its function is as follows. Exhibits a very high intrinsic GTPase hydrolysis rate. Involved in the addition of a carboxymethylaminomethyl (cmnm) group at the wobble position (U34) of certain tRNAs, forming tRNA-cmnm(5)s(2)U34. This is tRNA modification GTPase MnmE from Shewanella halifaxensis (strain HAW-EB4).